The primary structure comprises 312 residues: Olfactory receptor 1D5 (312 aa).

Over 1–25 (MDGDNQSENSQFLLLGISESPEQQQ) the chain is Extracellular. Asn5 carries an N-linked (GlcNAc...) asparagine glycan. A helical membrane pass occupies residues 26–49 (ILFWMFLSMYLVTVLGNVLIILAI). Residues 50-57 (SSDSRLHT) are Cytoplasmic-facing. A helical membrane pass occupies residues 58 to 79 (PMYFFLANLSFTDLFFVTNTIP). Residues 80 to 100 (KMLVNLQSQNKAISYAGCLTQ) are Extracellular-facing. A disulfide bond links Cys97 and Cys189. The helical transmembrane segment at 101–120 (LYFLVSLVTLDNLILAVMAY) threads the bilayer. Over 121–140 (DRYVAICCPLHYVTAMSPGL) the chain is Cytoplasmic. The helical transmembrane segment at 141–158 (CVLLLSLCWGLSVFYGLL) threads the bilayer. Topologically, residues 159-196 (LTLLLTRVTFCGPREIHYLFCDMYILLRLACSNTHIIH) are extracellular. A helical membrane pass occupies residues 197-220 (TVLVATGCFIFLTPLGFMTTSYVR). The Cytoplasmic segment spans residues 221–237 (IVRTILQIPSASKKYKA). The helical transmembrane segment at 238–260 (FSTCASHLGVVSLFYGTLAMVYL) threads the bilayer. Topologically, residues 261 to 271 (QPLHTYSMKDS) are extracellular. The chain crosses the membrane as a helical span at residues 272–291 (VATVMYAVVTPMMNPFIHSL). The Cytoplasmic portion of the chain corresponds to 292–312 (RNKDMHGALGRVLRRLFQRPK).

The protein belongs to the G-protein coupled receptor 1 family.

It is found in the cell membrane. Its function is as follows. Odorant receptor. This Pan troglodytes (Chimpanzee) protein is Olfactory receptor 1D5 (OR1D5).